The chain runs to 590 residues: Glutathione S-transferase T3 (590 aa).

The GST N-terminal domain maps to 1-82 (MKLKVYADRM…YLSSAYPSVV (82 aa)). Glutathione-binding positions include 11-12 (SQ), 40-41 (QL), 53-54 (KV), and 66-67 (ES). Positions 89 to 232 (DLSKRARIHS…KDRCQKQREM (144 aa)) constitute a GST C-terminal domain. A Myb-like domain is found at 265 to 336 (DRRKHRRKWS…HCKQRWSKLN (72 aa)). The segment at 402 to 427 (SKGGGSSKRTKLNNGDRVYSSSSNPE) is disordered.

This sequence belongs to the GST superfamily. Theta family.

The protein resides in the nucleus. It carries out the reaction RX + glutathione = an S-substituted glutathione + a halide anion + H(+). Its function is as follows. May be involved in the conjugation of reduced glutathione to a wide number of exogenous and endogenous hydrophobic electrophiles and have a detoxification role against certain herbicides. This Arabidopsis thaliana (Mouse-ear cress) protein is Glutathione S-transferase T3 (GSTT3).